We begin with the raw amino-acid sequence, 356 residues long: tRNA-specific 2-thiouridylase MnmA 2 (356 aa).

ATP-binding positions include 8–15 (GMSGGVDS) and M34. Residue C103 is the Nucleophile of the active site. C103 and C199 are joined by a disulfide. Residue G127 participates in ATP binding. Positions 149–151 (KDQ) are interaction with tRNA. Catalysis depends on C199, which acts as the Cysteine persulfide intermediate. The interaction with tRNA stretch occupies residues 305-306 (RY).

Belongs to the MnmA/TRMU family.

Its subcellular location is the cytoplasm. It carries out the reaction S-sulfanyl-L-cysteinyl-[protein] + uridine(34) in tRNA + AH2 + ATP = 2-thiouridine(34) in tRNA + L-cysteinyl-[protein] + A + AMP + diphosphate + H(+). Its function is as follows. Catalyzes the 2-thiolation of uridine at the wobble position (U34) of tRNA, leading to the formation of s(2)U34. The sequence is that of tRNA-specific 2-thiouridylase MnmA 2 from Clostridium botulinum (strain Okra / Type B1).